Reading from the N-terminus, the 45-residue chain is Photosystem II reaction center protein K (45 aa).

The propeptide occupies 1-8 (METIYLLA). Residues 16–40 (IFDPLVDVLPVIPLFFLALAFVWQA) traverse the membrane as a helical segment.

This sequence belongs to the PsbK family. As to quaternary structure, PSII is composed of 1 copy each of membrane proteins PsbA, PsbB, PsbC, PsbD, PsbE, PsbF, PsbH, PsbI, PsbJ, PsbK, PsbL, PsbM, PsbT, PsbX, PsbY, PsbZ, Psb30/Ycf12, peripheral proteins PsbO, CyanoQ (PsbQ), PsbU, PsbV and a large number of cofactors. It forms dimeric complexes.

The protein resides in the cellular thylakoid membrane. In terms of biological role, one of the components of the core complex of photosystem II (PSII). PSII is a light-driven water:plastoquinone oxidoreductase that uses light energy to abstract electrons from H(2)O, generating O(2) and a proton gradient subsequently used for ATP formation. It consists of a core antenna complex that captures photons, and an electron transfer chain that converts photonic excitation into a charge separation. This chain is Photosystem II reaction center protein K, found in Synechocystis sp. (strain ATCC 27184 / PCC 6803 / Kazusa).